The chain runs to 86 residues: V-type proton ATPase subunit e (86 aa).

A helical transmembrane segment spans residues 1 to 21 (MGILIPLVSVSAFWAIIGFGG). Residues 22–32 (PWIVPKGPNRG) lie on the Cytoplasmic side of the membrane. Residues 33–53 (IIQLMIIMTAVCCWMFWIMVF) traverse the membrane as a helical segment. Residues 54 to 86 (LHQLNPLIGPQINVKTIRWISEKWGDAPNVINN) are Lumenal-facing.

This sequence belongs to the V-ATPase e1/e2 subunit family. In terms of assembly, V-ATPase is a heteromultimeric enzyme made up of two complexes: the ATP-hydrolytic V1 complex and the proton translocation V0 complex. The V1 complex consists of three catalytic AB heterodimers that form a heterohexamer, three peripheral stalks each consisting of EG heterodimers, one central rotor including subunits D and F, and the regulatory subunits C and H. The proton translocation complex V0 consists of the proton transport subunit a, a ring of proteolipid subunits c9c'', rotary subunit d, subunits e and f, and the accessory subunits vah-19/Ac45 and vah-20/PRR.

It is found in the apical cell membrane. Functionally, subunit of the V0 complex of vacuolar(H+)-ATPase (V-ATPase), a multisubunit enzyme composed of a peripheral complex (V1) that hydrolyzes ATP and a membrane integral complex (V0) that translocates protons. V-ATPase is responsible for acidifying and maintaining the pH of intracellular compartments and in some cell types, is targeted to the plasma membrane, where it is responsible for acidifying the extracellular environment. During embryonic development, the V-ATPase is required to repress fusion of epidermal cells probably by negatively regulating eff-1-mediated cell fusion. This chain is V-type proton ATPase subunit e, found in Caenorhabditis elegans.